The primary structure comprises 202 residues: Protein phosphatase inhibitor 2 family member C (202 aa).

2 disordered regions span residues 1 to 51 (MSAS…DESS) and 71 to 118 (PGTS…EQES). The tract at residues 12–17 (KGILKN) is required for binding PPP1CC. Positions 19–35 (SSSGSSVATSGQQSGGT) are enriched in low complexity. A required for binding PPP1CC region spans residues 43–55 (KSQKWDESSILAA). Residues 71–80 (PGTSYMSVQD) are compositionally biased toward polar residues. The span at 84–112 (DSVRDVEGEDSVRGVEGKEATDASDHSCE) shows a compositional bias: basic and acidic residues. The segment at 144–147 (HYNE) is required for binding PPP1CC catalytic center, displacing metal ions and inhibition of PPP1CC catalytic activity. Residues 162 to 202 (LQSEDNENEETPQGTNEEKTAAEESEEAPLTGGLQTQSCDP) are disordered.

It belongs to the protein phosphatase inhibitor 2 family. As to expression, detected in sperm (at protein level).

Functionally, functions as a protein phosphatase inhibitor. It inhibits activity of the catalytic subunit of PP1 and weakly inhibits the activity of myosin-associated phosphates. This Homo sapiens (Human) protein is Protein phosphatase inhibitor 2 family member C.